Consider the following 493-residue polypeptide: MELKKLLECLTFYNVNGEVENCEITSLEMDSRKITSGSAFVCITGFTVDGHDYVDQAVKNGASAIFTSKPLMKEYGVPIIQVEDTNRALAMLAVKYYDYPTKHFPLIGVTGTNGKTTVTYLLDKIFEYHQKKAGVIGTIQVKIGEETFPIVNTTPNALELQKTFHVMREKDVKQGIMEVSSHALDMGRVYGCDYDIAVFTNLSQDHLDYHQDIQDYLRAKSLLFAQLGNGYDSEKEKYAIINDDDSSSHLLKRSTAQHVITYSCKKEATIMAKDIELTASGIRFKLHSPLGNITIQSRLMGMFNVYNMLAASAAAIASKVPLNVIQQALESIEGVNGRFEPIVEGQNYSVIVDFAHTPDSLENVLQTIKDFAKRNVYVVVGCGGDRDRKKRPLMAEVALNYADHAVFTSDNPRTEDPQAILDDMTAELDANSGSYEVVVDRKEGIAKAIQSAQKDDIVLIAGKGHETYQIIGHTKYDFDDRDVARNAIKQKGE.

Ser-31 contacts UDP-N-acetyl-alpha-D-muramoyl-L-alanyl-D-glutamate. An ATP-binding site is contributed by Gly-111–Thr-117. UDP-N-acetyl-alpha-D-muramoyl-L-alanyl-D-glutamate is bound by residues Asn-152, Thr-153–Thr-154, Ser-180, and Arg-188. Position 220 is an N6-carboxylysine (Lys-220). Meso-2,6-diaminopimelate-binding positions include Arg-386, Asp-410–Arg-413, Gly-462, and Glu-466. The Meso-diaminopimelate recognition motif signature appears at Asp-410–Arg-413.

Belongs to the MurCDEF family. MurE subfamily. Mg(2+) serves as cofactor. In terms of processing, carboxylation is probably crucial for Mg(2+) binding and, consequently, for the gamma-phosphate positioning of ATP.

The protein resides in the cytoplasm. The catalysed reaction is UDP-N-acetyl-alpha-D-muramoyl-L-alanyl-D-glutamate + meso-2,6-diaminopimelate + ATP = UDP-N-acetyl-alpha-D-muramoyl-L-alanyl-gamma-D-glutamyl-meso-2,6-diaminopimelate + ADP + phosphate + H(+). It participates in cell wall biogenesis; peptidoglycan biosynthesis. Functionally, catalyzes the addition of meso-diaminopimelic acid to the nucleotide precursor UDP-N-acetylmuramoyl-L-alanyl-D-glutamate (UMAG) in the biosynthesis of bacterial cell-wall peptidoglycan. In Oceanobacillus iheyensis (strain DSM 14371 / CIP 107618 / JCM 11309 / KCTC 3954 / HTE831), this protein is UDP-N-acetylmuramoyl-L-alanyl-D-glutamate--2,6-diaminopimelate ligase (murE1).